We begin with the raw amino-acid sequence, 612 residues long: Cyclin-dependent kinase 8 (612 aa).

Positions 23 to 345 (FENSKEIGRG…CEEAMNDIYF (323 aa)) constitute a Protein kinase domain. ATP contacts are provided by residues 29–37 (IGRGTYGLV) and K57. Catalysis depends on D155, which acts as the Proton acceptor. 5 stretches are compositionally biased toward low complexity: residues 403 to 455 (QQQM…MGQP), 472 to 483 (HQMMQQQHQSQH), 543 to 555 (PQPG…QQRP), 564 to 573 (QGYMNPQMGM), and 600 to 612 (NPQQ…QYHR). Disordered regions lie at residues 403-483 (QQQM…QSQH) and 543-612 (PQPG…QYHR).

It belongs to the protein kinase superfamily. CMGC Ser/Thr protein kinase family. CDC2/CDKX subfamily. Component of the Mediator complex. Requires Mg(2+) as cofactor.

The protein resides in the nucleus. It catalyses the reaction L-seryl-[protein] + ATP = O-phospho-L-seryl-[protein] + ADP + H(+). The enzyme catalyses L-threonyl-[protein] + ATP = O-phospho-L-threonyl-[protein] + ADP + H(+). It carries out the reaction [DNA-directed RNA polymerase] + ATP = phospho-[DNA-directed RNA polymerase] + ADP + H(+). In terms of biological role, component of the Mediator complex, a coactivator involved in regulated gene transcription of nearly all RNA polymerase II-dependent genes. Mediator functions as a bridge to convey information from gene-specific regulatory proteins to the basal RNA polymerase II transcription machinery. Mediator is recruited to promoters by direct interactions with regulatory proteins and serves as a scaffold for the assembly of a functional pre-initiation complex with RNA polymerase II and the general transcription factors. Phosphorylates the CTD (C-terminal domain) of the large subunit of RNA polymerase II (RNAp II), which may inhibit the formation of a transcription initiation complex. The sequence is that of Cyclin-dependent kinase 8 (cdk-8) from Caenorhabditis briggsae.